Reading from the N-terminus, the 325-residue chain is uncharacterized protein (325 aa).

Positions 49-151 (RYEHSIGVML…ELCADRTDYT (103 aa)) constitute an HD domain.

This is an uncharacterized protein from Bacillus subtilis (strain 168).